A 1579-amino-acid chain; its full sequence is Eukaryotic translation initiation factor 4 gamma 3 (1579 aa).

Disordered stretches follow at residues 1 to 35 (MNSQ…RPGV) and 128 to 326 (TQQQ…GPSL). The segment covering 10 to 25 (PFFQRPQIQPPRAAIP) has biased composition (low complexity). The span at 26 to 35 (NSSPSIRPGV) shows a compositional bias: polar residues. The PABPC1-binding stretch occupies residues 134-162 (PAKREKKTIRIRDPNQGGKDITEEIMSGG). The span at 167-183 (PTPPIGRPASTPTPPQQ) shows a compositional bias: pro residues. Residue Thr168 is modified to Phosphothreonine. Ser230, Ser232, and Ser267 each carry phosphoserine. Positions 266-292 (SSPTSLPPLARSSLPSPMSAALSSQPL) are enriched in low complexity. Basic and acidic residues predominate over residues 295 to 308 (AEDKCELPSSKEED). Polar residues predominate over residues 315-326 (PTSCTAASGPSL). A phosphoserine mark is found at Ser436, Ser470, Ser472, and Ser490. Residues 454-470 (RTCLSKDAKEMQDKAES) are compositionally biased toward basic and acidic residues. Disordered regions lie at residues 454 to 615 (RTCL…DTEG), 681 to 706 (RQTP…QRRE), and 724 to 744 (AENA…PESI). Positions 471–480 (ESDGQAEETA) are enriched in acidic residues. Polar residues predominate over residues 481-501 (DPQSLHSGRSPAPVQTATTAP). Composition is skewed to basic and acidic residues over residues 506-515 (KTKEQTRTPD) and 549-563 (SERD…KAEE). Residues 589-598 (SGSADSSADG) show a composition bias toward low complexity. Over residues 606–615 (ESWKPADTEG) the composition is skewed to basic and acidic residues. The tract at residues 614–625 (EGKKQYDREFLL) is EIF4E-binding. The tract at residues 694-1014 (VGPRRSQPGQ…EQRKVQQLMT (321 aa)) is eIF3/EIF4A-binding. HEAT repeat units lie at residues 740–778 (DPES…LTVD), 779–826 (TEER…GNTV), 827–900 (NFRK…LKML), 901–939 (TEAI…DFEK), and 940–979 (AKPR…LCNW). Residues 750-978 (FRKVRSILNK…QDVIDLRLCN (229 aa)) form the MIF4G domain. Residues 855-871 (KELEAASAPEERTRLHD) show a composition bias toward basic and acidic residues. Positions 855-875 (KELEAASAPEERTRLHDELEE) are disordered. Residues 989 to 1018 (KTIEQIHKEAKIEEQEEQRKVQQLMTKEKR) are a coiled coil. Disordered regions lie at residues 1009-1037 (VQQL…QGAK) and 1067-1214 (LGSW…LSEE). Residues 1086–1098 (LRSSASSLNRFSP) are compositionally biased toward low complexity. Phosphoserine; by CaMK1 is present on Ser1150. Basic and acidic residues-rich tracts occupy residues 1150–1169 (SSKD…EMLE) and 1179–1197 (DAER…ELAK). Positions 1154–1176 (LLDNQSQEEQRREMLETVKQLTG) form a coiled coil. Phosphoserine is present on Ser1212. The 123-residue stretch at 1215 to 1337 (EVERKSKSII…SMRELIVEFS (123 aa)) folds into the MI domain. Residues 1406–1438 (SSEALSKKELSAEELSQRLEKLIMEEKADDERI) are a coiled coil. Residues 1410–1579 (LSKKELSAEE…REAEEESEDN (170 aa)) form the W2 domain. An EIF4A-binding region spans residues 1427–1579 (LIMEEKADDE…REAEEESEDN (153 aa)). A necessary but not sufficient for MKNK1-binding region spans residues 1565 to 1579 (FFTWLREAEEESEDN).

The protein belongs to the eukaryotic initiation factor 4G family. Interacts with EIF4A, EIF4E, eIF3 and PABPC1. Part of a complex with EIF4E. eIF4F is a multi-subunit complex, the composition of which varies with external and internal environmental conditions. It is composed of at least EIF4A, EIF4E and EIF4G1/EIF4G3. EIF4G1/EIF4G3 interacts through its C-terminus with the serine/threonine kinases MKNK1, and with MKNK2. Appears to act as a scaffold protein, holding these enzymes in place to phosphorylate eIF4E. Non-phosphorylated EIF4EBP1 competes with EIF4G1/EIFG3 to interact with EIF4E; insulin stimulated MAP-kinase (MAPK1 and MAPK3) phosphorylation of EIF4EBP1 causes dissociation of the complex allowing EIF4G1/EIF4G3 to bind and consequent initiation of translation. EIF4G1/EIF4G3 interacts with PABPC1 to bring about circularization of the mRNA. Interacts with FXR1; promoting translation of FXR1 target mRNAs.

Component of the protein complex eIF4F, which is involved in the recognition of the mRNA cap, ATP-dependent unwinding of 5'-terminal secondary structure and recruitment of mRNA to the ribosome. Functional homolog of EIF4G1. This Mus musculus (Mouse) protein is Eukaryotic translation initiation factor 4 gamma 3 (Eif4g3).